We begin with the raw amino-acid sequence, 488 residues long: Glutamyl-tRNA(Gln) amidotransferase subunit A (488 aa).

Active-site charge relay system residues include Lys77 and Ser152. Ser176 functions as the Acyl-ester intermediate in the catalytic mechanism.

The protein belongs to the amidase family. GatA subfamily. Heterotrimer of A, B and C subunits.

It carries out the reaction L-glutamyl-tRNA(Gln) + L-glutamine + ATP + H2O = L-glutaminyl-tRNA(Gln) + L-glutamate + ADP + phosphate + H(+). In terms of biological role, allows the formation of correctly charged Gln-tRNA(Gln) through the transamidation of misacylated Glu-tRNA(Gln) in organisms which lack glutaminyl-tRNA synthetase. The reaction takes place in the presence of glutamine and ATP through an activated gamma-phospho-Glu-tRNA(Gln). The sequence is that of Glutamyl-tRNA(Gln) amidotransferase subunit A from Streptococcus agalactiae serotype III (strain NEM316).